Here is a 1492-residue protein sequence, read N- to C-terminus: DNA polymerase alpha catalytic subunit (1492 aa).

3 disordered regions span residues 34 to 112 (DFIV…VEQS), 162 to 195 (SVTL…DVNP), and 210 to 234 (ANSY…EMAN). A compositionally biased stretch (basic and acidic residues) spans 42–55 (YGYRDHGGEIWDRD). The segment covering 93–105 (NAASTNPSAQQKP) has biased composition (polar residues). Positions 166–178 (ESREEQERRRQSE) are enriched in basic and acidic residues. Composition is skewed to polar residues over residues 184–194 (ANIGQNQSDVN) and 210–224 (ANSY…SVSK). 8 residues coordinate Zn(2+): cysteine 1314, cysteine 1317, cysteine 1341, cysteine 1344, cysteine 1375, cysteine 1380, cysteine 1393, and cysteine 1398. The CysA-type zinc-finger motif lies at 1314–1344 (CPHCAHNYHFPGILVPSSNNTELTGLACVKC). Positions 1375-1398 (CKEPQCGMKTNQLLLNNKCIVKGC) match the CysB motif motif.

It belongs to the DNA polymerase type-B family.

The protein localises to the nucleus. It catalyses the reaction DNA(n) + a 2'-deoxyribonucleoside 5'-triphosphate = DNA(n+1) + diphosphate. Functionally, polymerase alpha in a complex with DNA primase is a replicative polymerase. The polypeptide is DNA polymerase alpha catalytic subunit (Sterkiella nova (Ciliate)).